The following is a 441-amino-acid chain: MFGAKKGNGHNKDFYDFNPKNLETIRNDLKNRHAELVIDALLKEEARQEIKRIIKRDYPVHFMDIDEDKVDDVIEYVVSELVGTGVIERLIKDRPDITDISYNGSHLIVESSDYKEIYKDNEHQITEQYITRLIQKFAHAVGKEFTPKNPIFDGVYGSIRINAVHSQNTNGNSTMSLRIVRPNLVLNEKNFETFAPQFIYDFFKVVMESRNNILISGETGTGKTEVLKLLFSFVRFDHKAIMIEDVPETHVKSLFPDKDVFSWLTGNGVTVTDEIVAALRNNPRWIMISELRGKETYEMIQAVLSGHHVVTSLHSVDAETSPKRLVNMSKIGYQVDEKSLEEDIMRYFNFGFHIKRVVVKTTDTTGKPIKRVVRYLAKIVEYSVEGCQMVFEQKYRNGKFTFSTGTLSEEFHDKLAEIDLSYELPKYTDEVAFKKGLIISR.

217–224 (GETGTGKT) provides a ligand contact to ATP.

It belongs to the GSP E family.

This is an uncharacterized protein from Bacillus anthracis.